We begin with the raw amino-acid sequence, 259 residues long: Protein-L-isoaspartate O-methyltransferase 1 (259 aa).

S109 is an active-site residue.

This sequence belongs to the methyltransferase superfamily. L-isoaspartyl/D-aspartyl protein methyltransferase family.

Its subcellular location is the cytoplasm. The enzyme catalyses [protein]-L-isoaspartate + S-adenosyl-L-methionine = [protein]-L-isoaspartate alpha-methyl ester + S-adenosyl-L-homocysteine. Functionally, catalyzes the methyl esterification of L-isoaspartyl residues in peptides and proteins that result from spontaneous decomposition of normal L-aspartyl and L-asparaginyl residues. It plays a role in the repair and/or degradation of damaged proteins. The polypeptide is Protein-L-isoaspartate O-methyltransferase 1 (Cupriavidus necator (strain ATCC 17699 / DSM 428 / KCTC 22496 / NCIMB 10442 / H16 / Stanier 337) (Ralstonia eutropha)).